The chain runs to 192 residues: Phosphoheptose isomerase (192 aa).

An SIS domain is found at 34-192 (LADALGNGKK…LEKRLFGERR (159 aa)). 49–51 (NGG) contacts substrate. Zn(2+)-binding residues include His-58 and Glu-62. Substrate is bound by residues Glu-62, 91-92 (ND), 117-119 (STS), Ser-122, and Gln-169. Gln-169 and His-177 together coordinate Zn(2+).

It belongs to the SIS family. GmhA subfamily. As to quaternary structure, homotetramer. The cofactor is Zn(2+).

Its subcellular location is the cytoplasm. The enzyme catalyses 2 D-sedoheptulose 7-phosphate = D-glycero-alpha-D-manno-heptose 7-phosphate + D-glycero-beta-D-manno-heptose 7-phosphate. It participates in carbohydrate biosynthesis; D-glycero-D-manno-heptose 7-phosphate biosynthesis; D-glycero-alpha-D-manno-heptose 7-phosphate and D-glycero-beta-D-manno-heptose 7-phosphate from sedoheptulose 7-phosphate: step 1/1. Catalyzes the isomerization of sedoheptulose 7-phosphate in D-glycero-D-manno-heptose 7-phosphate. This chain is Phosphoheptose isomerase, found in Geotalea daltonii (strain DSM 22248 / JCM 15807 / FRC-32) (Geobacter daltonii).